We begin with the raw amino-acid sequence, 515 residues long: Putative ribose/galactose/methyl galactoside import ATP-binding protein (515 aa).

2 consecutive ABC transporter domains span residues 26–262 (LEVA…VGRE) and 272–511 (VALG…KIMD). 58–65 (GENGAGKS) serves as a coordination point for ATP.

Belongs to the ABC transporter superfamily. Carbohydrate importer 2 (CUT2) (TC 3.A.1.2) family.

It is found in the cell inner membrane. The catalysed reaction is D-ribose(out) + ATP + H2O = D-ribose(in) + ADP + phosphate + H(+). It carries out the reaction D-galactose(out) + ATP + H2O = D-galactose(in) + ADP + phosphate + H(+). Part of an ABC transporter complex involved in carbohydrate import. Could be involved in ribose, galactose and/or methyl galactoside import. Responsible for energy coupling to the transport system. The chain is Putative ribose/galactose/methyl galactoside import ATP-binding protein from Hahella chejuensis (strain KCTC 2396).